Consider the following 631-residue polypeptide: FAST kinase domain-containing protein 4 (631 aa).

The transit peptide at 1-107 (MAAHLVKRCT…NQAAMVLIRL (107 aa)) directs the protein to the mitochondrion. A Phosphoserine modification is found at Ser553. Residues 561–619 (LAFLRWEFPNFNSRSKDLLGRFVLARRHIVAAGFLIVDVPFYEWLELKSEWQKGAYLKD) form the RAP domain.

This sequence belongs to the FAST kinase family. In terms of tissue distribution, ubiquitously expressed. Expression detected in spleen, thymus, testis, ovary, colon, heart, smooth muscle, kidney, brain, lung, liver and white adipose tissue with highest expression in smooth muscle.

Its subcellular location is the mitochondrion matrix. Its function is as follows. Plays a role in processing of mitochondrial RNA precursors and in stabilization of a subset of mature mitochondrial RNA species, such as MT-CO1, MT-CO2, MT-CYB, MT-CO3, MT-ND3, MT-ND5 and MT-ATP8/6. May play a role in cell cycle progression. This is FAST kinase domain-containing protein 4 from Homo sapiens (Human).